A 417-amino-acid chain; its full sequence is Serine--tRNA ligase (417 aa).

232–234 contacts L-serine; the sequence is TAE. ATP-binding positions include 263-265 and V279; that span reads RRE. E286 is an L-serine binding site. ATP is bound at residue 350 to 353; sequence EISS. S385 provides a ligand contact to L-serine.

The protein belongs to the class-II aminoacyl-tRNA synthetase family. Type-1 seryl-tRNA synthetase subfamily. Homodimer. The tRNA molecule binds across the dimer.

The protein localises to the cytoplasm. It carries out the reaction tRNA(Ser) + L-serine + ATP = L-seryl-tRNA(Ser) + AMP + diphosphate + H(+). It catalyses the reaction tRNA(Sec) + L-serine + ATP = L-seryl-tRNA(Sec) + AMP + diphosphate + H(+). Its pathway is aminoacyl-tRNA biosynthesis; selenocysteinyl-tRNA(Sec) biosynthesis; L-seryl-tRNA(Sec) from L-serine and tRNA(Sec): step 1/1. Functionally, catalyzes the attachment of serine to tRNA(Ser). Is also able to aminoacylate tRNA(Sec) with serine, to form the misacylated tRNA L-seryl-tRNA(Sec), which will be further converted into selenocysteinyl-tRNA(Sec). The protein is Serine--tRNA ligase of Leptospira interrogans serogroup Icterohaemorrhagiae serovar copenhageni (strain Fiocruz L1-130).